We begin with the raw amino-acid sequence, 90 residues long: Small ribosomal subunit protein bS20 (90 aa).

Positions 1–25 (MANSAQARKRARQAAKANSHNSALR) are disordered.

It belongs to the bacterial ribosomal protein bS20 family.

Functionally, binds directly to 16S ribosomal RNA. This chain is Small ribosomal subunit protein bS20, found in Burkholderia multivorans (strain ATCC 17616 / 249).